The following is a 416-amino-acid chain: UDP-N-acetylmuramoylalanine--D-glutamate ligase (416 aa).

Gly108–Thr114 contacts ATP.

This sequence belongs to the MurCDEF family.

Its subcellular location is the cytoplasm. The catalysed reaction is UDP-N-acetyl-alpha-D-muramoyl-L-alanine + D-glutamate + ATP = UDP-N-acetyl-alpha-D-muramoyl-L-alanyl-D-glutamate + ADP + phosphate + H(+). The protein operates within cell wall biogenesis; peptidoglycan biosynthesis. Cell wall formation. Catalyzes the addition of glutamate to the nucleotide precursor UDP-N-acetylmuramoyl-L-alanine (UMA). This chain is UDP-N-acetylmuramoylalanine--D-glutamate ligase, found in Chlamydia trachomatis serovar L2 (strain ATCC VR-902B / DSM 19102 / 434/Bu).